A 140-amino-acid polypeptide reads, in one-letter code: Mercuric transport protein MerC (140 aa).

Topologically, residues 2 to 10 are cytoplasmic; the sequence is GLMTRIADK. A helical transmembrane segment spans residues 11–31; sequence TGALGSVVSAMGCAACFPALA. 2 residues coordinate Hg(2+): Gly22 and Ala25. Residues 32 to 46 lie on the Periplasmic side of the membrane; sequence SFGAAIGLGFLSQYE. A helical membrane pass occupies residues 47-67; it reads GLFISRLLPLFAALAFLANAL. At 68–78 the chain is on the cytoplasmic side; sequence GWFSHRQWLRS. Residues 79–99 traverse the membrane as a helical segment; it reads LLGMIGPAIVFAATVWLLGNW. Over 100–106 the chain is Periplasmic; that stretch reads WTANLMY. Residues 107–127 traverse the membrane as a helical segment; that stretch reads VGLALMIGVSIWDFVSPAHRR. Residues 128-140 lie on the Cytoplasmic side of the membrane; that stretch reads CGPDGCELPAKRL.

Its subcellular location is the cell inner membrane. Uptake of Hg(2+) is decreased by iodoacetamide and iodoacetate, and is completely inhibited by the thiol-modifying reagent N-ethylmaleimide (NEM). Its function is as follows. Involved in mercuric ion uptake and binding. MerC-mediated Hg(2+) uptake does not require MerP. The protein is Mercuric transport protein MerC of Shigella flexneri.